A 550-amino-acid chain; its full sequence is Arginine--tRNA ligase (550 aa).

Positions 130–140 (ANPTGPIHLGG) match the 'HIGH' region motif.

Belongs to the class-I aminoacyl-tRNA synthetase family. In terms of assembly, monomer.

The protein localises to the cytoplasm. The enzyme catalyses tRNA(Arg) + L-arginine + ATP = L-arginyl-tRNA(Arg) + AMP + diphosphate. This chain is Arginine--tRNA ligase, found in Corynebacterium diphtheriae (strain ATCC 700971 / NCTC 13129 / Biotype gravis).